A 447-amino-acid polypeptide reads, in one-letter code: MLLDAGPQYPAIGVTTFGASRHHSAGDVAERDVGLGINPFADGMGAFKLNPSSHELASAGQTAFTSQAPGYAAAAALGHHHHPGHVGSYSSAAFNSTRDFLFRNRGFGDAAAAASAQHSLFAASAGGFGGPHGHTDAAGHLLFPGLHEQAAGHASPNVVNGQMRLGFSGDMYPRPEQYGQVTSPRSEHYAAPQLHGYGPMNVNMAAHHGAGAFFRYMRQPIKQELICKWIEPEQLANPKKSCNKTFSTMHELVTHVTVEHVGGPEQSNHICFWEECPREGKPFKAKYKLVNHIRVHTGEKPFPCPFPGCGKVFARSENLKIHKRTHTGEKPFKCEFEGCDRRFANSSDRKKHMHVHTSDKPYLCKMCDKSYTHPSSLRKHMKVHESSSQGSQPSPAASSGYESSTPPTIVSPSTDNPTTSSLSPSSSAVHHTAGHSALSSNFNEWYV.

The C2H2-type 1; atypical zinc finger occupies 225-260 (LICKWIEPEQLANPKKSCNKTFSTMHELVTHVTVEH). A C2H2-type 2; atypical zinc finger spans residues 269–296 (HICFWEECPREGKPFKAKYKLVNHIRVH). 3 consecutive C2H2-type zinc fingers follow at residues 302–326 (FPCPFPGCGKVFARSENLKIHKRTH), 332–356 (FKCEFEGCDRRFANSSDRKKHMHVH), and 362–384 (YLCKMCDKSYTHPSSLRKHMKVH). The tract at residues 375–431 (SSLRKHMKVHESSSQGSQPSPAASSGYESSTPPTIVSPSTDNPTTSSLSPSSSAVHH) is disordered. Low complexity predominate over residues 386-427 (SSSQGSQPSPAASSGYESSTPPTIVSPSTDNPTTSSLSPSSS).

It belongs to the GLI C2H2-type zinc-finger protein family. As to quaternary structure, interacts (via the C2H2-type domains 3, 4 and 5) with MDFIC (via the C2H2-type domains 3, 4 and 5). Interacts with GLI1; the interaction enhances transcription activation. Interacts with GLI2. Interacts with GLI3; the interaction enhances transcription activation. As to expression, CNS. A high level expression is seen in the cerebellum. Detected in the nuclei of the cerebellar granule cell lineage from the progenitor cells of the external germinal layer to the postmigrated cells of the internal granular layer. Detected in medulloblastoma (26/29 cases), but not present in all other tumors examined.

It localises to the nucleus. It is found in the cytoplasm. Functionally, acts as a transcriptional activator. Involved in neurogenesis. Plays important roles in the early stage of organogenesis of the CNS, as well as during dorsal spinal cord development and maturation of the cerebellum. Involved in the spatial distribution of mossy fiber (MF) neurons within the pontine gray nucleus (PGN). Plays a role in the regulation of MF axon pathway choice. Promotes MF migration towards ipsilaterally-located cerebellar territories. May have a role in shear flow mechanotransduction in osteocytes. Retains nuclear GLI1 and GLI3 in the cytoplasm. Binds to the minimal GLI-consensus sequence 5'-TGGGTGGTC-3'. The chain is Zinc finger protein ZIC 1 (ZIC1) from Homo sapiens (Human).